We begin with the raw amino-acid sequence, 520 residues long: Glycosyl hydrolase family 109 protein 5 (520 aa).

The signal sequence occupies residues 1–27 (MRTFKSLMISLCMGTTLCMCLPQTTTA). Residues 77–78 (MR), D99, 147–150 (WLHH), 167–168 (EV), and N196 each bind NAD(+). Substrate is bound by residues Y225, R248, 260–263 (YATH), and Y338. Position 260 (Y260) interacts with NAD(+).

It belongs to the Gfo/Idh/MocA family. Glycosyl hydrolase 109 subfamily. Requires NAD(+) as cofactor.

Functionally, glycosidase. In Phocaeicola vulgatus (strain ATCC 8482 / DSM 1447 / JCM 5826 / CCUG 4940 / NBRC 14291 / NCTC 11154) (Bacteroides vulgatus), this protein is Glycosyl hydrolase family 109 protein 5.